The sequence spans 100 residues: uncharacterized protein (100 aa).

The protein localises to the virion. This is an uncharacterized protein from Acanthamoeba polyphaga mimivirus (APMV).